We begin with the raw amino-acid sequence, 760 residues long: Mitochondrial intermediate peptidase (760 aa).

The transit peptide at 1–19 directs the protein to the mitochondrion; sequence MLARSVRTLVVSPKTVFRF. Residue H543 coordinates Zn(2+). E544 is an active-site residue. H547 provides a ligand contact to Zn(2+).

The protein belongs to the peptidase M3 family. Zn(2+) is required as a cofactor.

It localises to the mitochondrion matrix. It carries out the reaction Release of an N-terminal octapeptide as second stage of processing of some proteins imported into the mitochondrion.. Functionally, cleaves proteins, imported into the mitochondrion, to their mature size. While most mitochondrial precursor proteins are processed to the mature form in one step by mitochondrial processing peptidase (MPP), the sequential cleavage by MIP of an octapeptide after initial processing by MPP is a required step for a subgroup of nuclear-encoded precursor proteins destined for the matrix or the inner membrane. In Leucoagaricus gongylophorus (Leaf-cutting ant fungus), this protein is Mitochondrial intermediate peptidase (OCT1).